We begin with the raw amino-acid sequence, 142 residues long: Immunoglobulin omega chain (142 aa).

The signal sequence occupies residues 1 to 19 (MAWTSVLLMLLAHLTGCGP). The tract at residues 20–41 (QPMVHQPPSASSSLGATIRLSC) is framework-1. A disulfide bridge links Cys41 with Cys115. Residues 42 to 56 (TLSNDHNIGIYSIYW) form a complementarity-determining-1 region. The interval 57-70 (YQQRPGHPPRFLLR) is framework-2. Positions 71 to 81 (YFSHSDKHQGP) are complementarity-determining-2. The interval 82-115 (DIPPRFSGSKDTARNLGYLSISELQPEDEAVYYC) is framework-3.

This sequence belongs to the immunoglobulin superfamily. In terms of tissue distribution, only expressed by pre-B-cells.

Functionally, associates with the Ig-mu chain to form a molecular complex that is expressed on the surface of pre-B-cells. This complex presumably regulates Ig gene rearrangements in the early steps of B-cell differentiation. In Mus musculus (Mouse), this protein is Immunoglobulin omega chain.